We begin with the raw amino-acid sequence, 344 residues long: Phosphate acyltransferase (344 aa).

This sequence belongs to the PlsX family. Homodimer. Probably interacts with PlsY.

The protein localises to the cytoplasm. The catalysed reaction is a fatty acyl-[ACP] + phosphate = an acyl phosphate + holo-[ACP]. Its pathway is lipid metabolism; phospholipid metabolism. Functionally, catalyzes the reversible formation of acyl-phosphate (acyl-PO(4)) from acyl-[acyl-carrier-protein] (acyl-ACP). This enzyme utilizes acyl-ACP as fatty acyl donor, but not acyl-CoA. This Paracidovorax citrulli (strain AAC00-1) (Acidovorax citrulli) protein is Phosphate acyltransferase.